The following is a 356-amino-acid chain: Glycerophosphodiester phosphodiesterase (356 aa).

The N-terminal stretch at 1–20 (MRGTYCVTLWGGVFAALVAG) is a signal peptide. C21 carries the N-palmitoyl cysteine lipid modification. C21 carries the S-diacylglycerol cysteine lipid modification. Residues 25-314 (RMIVAYRGAA…CHVHTVRKET (290 aa)) form the GP-PDE domain.

It belongs to the glycerophosphoryl diester phosphodiesterase family. Palmitoylated upon expression of a fusion protein with first 40 residues fused to PhoA in E.coli.

Its subcellular location is the cell inner membrane. The enzyme catalyses a sn-glycero-3-phosphodiester + H2O = an alcohol + sn-glycerol 3-phosphate + H(+). Its function is as follows. Glycerophosphoryl diester phosphodiesterase hydrolyzes deacylated phospholipids to G3P and the corresponding alcohols. In terms of biological role, binds human IgA, IgD and the Fc portion of IgG but not IgM, which may contribute to evasion of the human immune system. In Treponema pallidum (strain Nichols), this protein is Glycerophosphodiester phosphodiesterase (glpQ).